Here is a 789-residue protein sequence, read N- to C-terminus: Mitochondrial inner membrane m-AAA protease component AFG3L1 (789 aa).

The transit peptide at 1–70 directs the protein to the mitochondrion; sequence MLLRLVGAAG…KLTSFSPRLY (70 aa). The interval 81–121 is disordered; that stretch reads FKNKKNRKSASPGNSVPPKKEPKNAGPGGDGGNRGGKGDDF. Gly residues predominate over residues 106–115; sequence GPGGDGGNRG. Transmembrane regions (helical) follow at residues 139 to 158 and 246 to 264; these read FRSL…YFYF and FLRS…LYAM. Residues Val-302, Ala-303, Thr-344, Gly-345, Lys-346, Thr-347, Leu-348, and His-482 each contribute to the ATP site. Residue His-566 coordinates Zn(2+). Glu-567 is an active-site residue. Positions 570 and 641 each coordinate Zn(2+). The tract at residues 749–789 is disordered; it reads EEFVEGTGSLEEDTSLPEGLKDWNKGREEGGTERGLQESPV. Residues 767 to 789 show a composition bias toward basic and acidic residues; that stretch reads GLKDWNKGREEGGTERGLQESPV.

In the N-terminal section; belongs to the AAA ATPase family. This sequence in the C-terminal section; belongs to the peptidase M41 family. In terms of assembly, homooligomer. Forms heterohexamers with Spg7 and Afg3l1. The m-AAA protease is either composed of homohexamers of Afg3l2 or heterohexamers of Afg3l1, Afg3l2 and/or Spg7. It depends on Zn(2+) as a cofactor.

It is found in the mitochondrion inner membrane. The enzyme catalyses ATP + H2O = ADP + phosphate + H(+). Functionally, catalytic component of the m-AAA protease, a protease that plays a key role in proteostasis of inner mitochondrial membrane proteins, and which is essential for axonal and neuron development. Afg3l1 possesses both ATPase and protease activities: the ATPase activity is required to unfold substrates, threading them into the internal proteolytic cavity for hydrolysis into small peptide fragments. The m-AAA protease exerts a dual role in the mitochondrial inner membrane: it mediates the processing of specific regulatory proteins and ensures protein quality control by degrading misfolded polypeptides. Required for SPG7 maturation into its active mature form after SPG7 cleavage by mitochondrial-processing peptidase (MPP). The sequence is that of Mitochondrial inner membrane m-AAA protease component AFG3L1 from Mus musculus (Mouse).